The chain runs to 176 residues: ATP-dependent protease subunit HslV (176 aa).

Thr6 is an active-site residue. Na(+)-binding residues include Gly161, Cys164, and Thr167.

It belongs to the peptidase T1B family. HslV subfamily. A double ring-shaped homohexamer of HslV is capped on each side by a ring-shaped HslU homohexamer. The assembly of the HslU/HslV complex is dependent on binding of ATP.

The protein resides in the cytoplasm. It carries out the reaction ATP-dependent cleavage of peptide bonds with broad specificity.. With respect to regulation, allosterically activated by HslU binding. Functionally, protease subunit of a proteasome-like degradation complex believed to be a general protein degrading machinery. The polypeptide is ATP-dependent protease subunit HslV (Thermotoga sp. (strain RQ2)).